The chain runs to 538 residues: Sterol esterase 2 (538 aa).

Topologically, residues 1–11 (MVNKVVDEVQR) are cytoplasmic. Residues 12–32 (LVSAIILTSFMTGLFILSLWK) traverse the membrane as a helical; Signal-anchor for type II membrane protein segment. Over 33 to 538 (NYVTVHFQHK…IENLRFPNAR (506 aa)) the chain is Lumenal. The segment at 42 to 87 (KNDPRDTRSSRTKIQPNDKKKKRPARHSRPLSISSTTPLDLQRDQE) is disordered. The segment covering 60 to 70 (KKKKRPARHSR) has biased composition (basic residues). A phosphoserine mark is found at serine 73 and serine 107. The active-site Nucleophile is the serine 287. Catalysis depends on charge relay system residues aspartate 480 and histidine 511.

The protein belongs to the AB hydrolase superfamily. Not glycosylated.

It localises to the cell membrane. It carries out the reaction a sterol ester + H2O = a sterol + a fatty acid + H(+). Mediates the hydrolysis of steryl esters. Required for mobilization of steryl ester, thereby playing a central role in lipid metabolism. This is Sterol esterase 2 (YEH2) from Saccharomyces cerevisiae (strain ATCC 204508 / S288c) (Baker's yeast).